The chain runs to 202 residues: 3-isopropylmalate dehydratase small subunit (202 aa).

Belongs to the LeuD family. LeuD type 1 subfamily. Heterodimer of LeuC and LeuD.

The catalysed reaction is (2R,3S)-3-isopropylmalate = (2S)-2-isopropylmalate. It functions in the pathway amino-acid biosynthesis; L-leucine biosynthesis; L-leucine from 3-methyl-2-oxobutanoate: step 2/4. Functionally, catalyzes the isomerization between 2-isopropylmalate and 3-isopropylmalate, via the formation of 2-isopropylmaleate. The polypeptide is 3-isopropylmalate dehydratase small subunit (Rhizobium johnstonii (strain DSM 114642 / LMG 32736 / 3841) (Rhizobium leguminosarum bv. viciae)).